We begin with the raw amino-acid sequence, 233 residues long: Lipoprotein-releasing system ATP-binding protein LolD (233 aa).

Residues 6 to 233 (LQCDNLCKRY…TAELSLMGAE (228 aa)) form the ABC transporter domain. 42-49 (GSSGSGKS) is an ATP binding site.

It belongs to the ABC transporter superfamily. Lipoprotein translocase (TC 3.A.1.125) family. As to quaternary structure, the complex is composed of two ATP-binding proteins (LolD) and two transmembrane proteins (LolC and LolE).

The protein resides in the cell inner membrane. Functionally, part of the ABC transporter complex LolCDE involved in the translocation of mature outer membrane-directed lipoproteins, from the inner membrane to the periplasmic chaperone, LolA. Responsible for the formation of the LolA-lipoprotein complex in an ATP-dependent manner. This is Lipoprotein-releasing system ATP-binding protein LolD from Escherichia coli O6:K15:H31 (strain 536 / UPEC).